Here is a 322-residue protein sequence, read N- to C-terminus: Coelomocyte uptake defective protein 15 (322 aa).

Positions Met1 to Ser20 are cleaved as a signal peptide. N-linked (GlcNAc...) asparagine glycosylation is found at Asn62, Asn98, Asn144, Asn170, Asn180, Asn183, and Asn222. A helical transmembrane segment spans residues Leu244–Ala264.

The protein belongs to the OSTM1 family.

Its subcellular location is the membrane. Modulates the transport of substances from the endosomal to lysosomal compartments. Plays a role in lysosome formation and function in coelomocytes. The chain is Coelomocyte uptake defective protein 15 from Caenorhabditis elegans.